The sequence spans 264 residues: NAD-capped RNA hydrolase NudC (264 aa).

Residues Cys-99 and Cys-102 each contribute to the Zn(2+) site. Position 112 (Glu-112) interacts with substrate. The Zn(2+) site is built by Cys-117 and Cys-120. Tyr-125 is a binding site for substrate. Residues 126–253 (PVICPSIIVA…TIARKLIHAT (128 aa)) enclose the Nudix hydrolase domain. The a divalent metal cation site is built by Ala-162, Glu-178, and Glu-182. The Nudix box signature appears at 163–184 (GFVEVGETFEQAVQREVFEETG). 196-203 (QPWAFPNS) contributes to the substrate binding site. Residue Glu-223 participates in a divalent metal cation binding. Ala-246 contacts substrate.

It belongs to the Nudix hydrolase family. NudC subfamily. In terms of assembly, homodimer. Mg(2+) serves as cofactor. It depends on Mn(2+) as a cofactor. Requires Zn(2+) as cofactor.

It catalyses the reaction a 5'-end NAD(+)-phospho-ribonucleoside in mRNA + H2O = a 5'-end phospho-adenosine-phospho-ribonucleoside in mRNA + beta-nicotinamide D-ribonucleotide + 2 H(+). The catalysed reaction is NAD(+) + H2O = beta-nicotinamide D-ribonucleotide + AMP + 2 H(+). The enzyme catalyses NADH + H2O = reduced beta-nicotinamide D-ribonucleotide + AMP + 2 H(+). Its function is as follows. mRNA decapping enzyme that specifically removes the nicotinamide adenine dinucleotide (NAD) cap from a subset of mRNAs by hydrolyzing the diphosphate linkage to produce nicotinamide mononucleotide (NMN) and 5' monophosphate mRNA. The NAD-cap is present at the 5'-end of some mRNAs and stabilizes RNA against 5'-processing. Has preference for mRNAs with a 5'-end purine. Catalyzes the hydrolysis of a broad range of dinucleotide pyrophosphates. The sequence is that of NAD-capped RNA hydrolase NudC from Haemophilus influenzae (strain PittGG).